The primary structure comprises 340 residues: Thioesterase pkgB (340 aa).

Histidine 97, histidine 99, aspartate 101, histidine 102, and histidine 205 together coordinate Zn(2+). Aspartate 101 (proton donor/acceptor) is an active-site residue. Residues serine 242 to serine 258 show a composition bias toward low complexity. The interval serine 242–serine 271 is disordered.

This sequence belongs to the metallo-beta-lactamase superfamily. Zn(2+) is required as a cofactor.

It carries out the reaction 3,5,7,9,11,13-hexaoxotetradecanoyl-[ACP] = dehydrocitreoisocoumarin + holo-[ACP] + H2O. The catalysed reaction is 3,5,7,9,11-pentaoxododecanoyl-[ACP] = 6,8-dihydroxy-3-(2-oxopropyl)-isocoumarin + holo-[ACP] + H2O. Functionally, thioesterase; part of the pkg gene cluster that mediates the biosynthesis of dihydrocitreoisocoumarin and 6,8-dihydroxy-3-(2-oxopropyl)-isocoumarin. The non-reducing polyketide synthase pkgA performs the condensation of one acetyl-CoA starter unit with 6 and 5 malonyl-CoA units, respectively. As pkgA lacks a releasing domain, the thioesterase pkgB is necessary to break the thioester bond and release dihydrocitreoisocoumarin and 6,8-dihydroxy-3-(2-oxopropyl)-isocoumarin from pkgA. This Emericella nidulans (strain FGSC A4 / ATCC 38163 / CBS 112.46 / NRRL 194 / M139) (Aspergillus nidulans) protein is Thioesterase pkgB.